Here is a 136-residue protein sequence, read N- to C-terminus: MSIIKEFREFAMRGNVVDLAVGVIIGAAFGKIVSSLVADIIMPPLGLLIGGIDFKQFAVTLRDAQGDIPAVVMHYGVFIQNVFDFLIVAFAIFMAIKLINKLNRKKEEPAAAPAPTKEEVLLTEIRDLLKEQNNRS.

2 helical membrane passes run 10-30 (FAMR…AAFG) and 76-96 (GVFI…FMAI).

The protein belongs to the MscL family. Homopentamer.

The protein resides in the cell inner membrane. Its function is as follows. Channel that opens in response to stretch forces in the membrane lipid bilayer. May participate in the regulation of osmotic pressure changes within the cell. This is Large-conductance mechanosensitive channel from Escherichia coli O139:H28 (strain E24377A / ETEC).